The chain runs to 643 residues: Ecto-NOX disulfide-thiol exchanger 1 (643 aa).

In terms of domain architecture, RRM spans 142 to 221 (KTVFVGGLPE…GRLHVDFAQA (80 aa)). 2 coiled-coil regions span residues 307–342 (VQSA…LTGI) and 425–570 (QAYA…EALL).

Belongs to the ENOX family. Cu cation is required as a cofactor. As to expression, expressed in lymphocyte cells, breast and breast cancer (at protein level). Found in the sera of cancer patients with a wide variety of cancers including breast, prostate, lung and ovarian cancers, leukemias, and lymphomas. Found also in the serum of healthy volunteers or patients with disorders other than cancer. Probably shed into serum by cancer cells.

Its subcellular location is the cell membrane. It localises to the secreted. The protein localises to the extracellular space. Its activity is regulated as follows. Not inhibited by the antitumor sulfonylurea LY181984, the vabilloid capsaicin, and retinoids. Its function is as follows. Probably acts as a terminal oxidase of plasma electron transport from cytosolic NAD(P)H via hydroquinones to acceptors at the cell surface. Hydroquinone oxidase activity alternates with a protein disulfide-thiol interchange/oxidoreductase activity which may control physical membrane displacements associated with vesicle budding or cell enlargement. The activities oscillate with a period length of 24 minutes and play a role in control of the ultradian cellular biological clock. This chain is Ecto-NOX disulfide-thiol exchanger 1 (ENOX1), found in Homo sapiens (Human).